The sequence spans 359 residues: Ribosomal RNA large subunit methyltransferase M (359 aa).

Residues serine 186, 219–222 (CPGG), aspartate 238, aspartate 258, and aspartate 275 each bind S-adenosyl-L-methionine. Lysine 304 (proton acceptor) is an active-site residue.

Belongs to the class I-like SAM-binding methyltransferase superfamily. RNA methyltransferase RlmE family. RlmM subfamily. As to quaternary structure, monomer.

The protein localises to the cytoplasm. The catalysed reaction is cytidine(2498) in 23S rRNA + S-adenosyl-L-methionine = 2'-O-methylcytidine(2498) in 23S rRNA + S-adenosyl-L-homocysteine + H(+). Catalyzes the 2'-O-methylation at nucleotide C2498 in 23S rRNA. The sequence is that of Ribosomal RNA large subunit methyltransferase M from Vibrio vulnificus (strain YJ016).